We begin with the raw amino-acid sequence, 55 residues long: Large ribosomal subunit protein bL33 (55 aa).

Belongs to the bacterial ribosomal protein bL33 family.

The polypeptide is Large ribosomal subunit protein bL33 (Kocuria rhizophila (strain ATCC 9341 / DSM 348 / NBRC 103217 / DC2201)).